A 299-amino-acid chain; its full sequence is Oxygen-dependent coproporphyrinogen-III oxidase (299 aa).

A substrate-binding site is contributed by S92. H96 and H106 together coordinate a divalent metal cation. Catalysis depends on H106, which acts as the Proton donor. Substrate is bound at residue 108–110 (NVR). A divalent metal cation-binding residues include H145 and H175. Residues 240-275 (YVEFNLVWDRGTLFGLQTGGRTESILMSMPPLVRWE) are important for dimerization. Position 258–260 (258–260 (GGR)) interacts with substrate.

This sequence belongs to the aerobic coproporphyrinogen-III oxidase family. Homodimer. It depends on a divalent metal cation as a cofactor.

Its subcellular location is the cytoplasm. The catalysed reaction is coproporphyrinogen III + O2 + 2 H(+) = protoporphyrinogen IX + 2 CO2 + 2 H2O. The protein operates within porphyrin-containing compound metabolism; protoporphyrin-IX biosynthesis; protoporphyrinogen-IX from coproporphyrinogen-III (O2 route): step 1/1. In terms of biological role, involved in the heme biosynthesis. Catalyzes the aerobic oxidative decarboxylation of propionate groups of rings A and B of coproporphyrinogen-III to yield the vinyl groups in protoporphyrinogen-IX. This Citrobacter koseri (strain ATCC BAA-895 / CDC 4225-83 / SGSC4696) protein is Oxygen-dependent coproporphyrinogen-III oxidase.